The primary structure comprises 420 residues: CinA-like protein (420 aa).

It belongs to the CinA family.

This Chloroherpeton thalassium (strain ATCC 35110 / GB-78) protein is CinA-like protein.